The sequence spans 258 residues: tRNA pseudouridine synthase A (258 aa).

The active-site Nucleophile is the D52. Y110 provides a ligand contact to substrate.

Belongs to the tRNA pseudouridine synthase TruA family. Homodimer.

The enzyme catalyses uridine(38/39/40) in tRNA = pseudouridine(38/39/40) in tRNA. Functionally, formation of pseudouridine at positions 38, 39 and 40 in the anticodon stem and loop of transfer RNAs. This chain is tRNA pseudouridine synthase A, found in Francisella tularensis subsp. tularensis (strain FSC 198).